A 514-amino-acid polypeptide reads, in one-letter code: 2-isopropylmalate synthase (514 aa).

Positions 5 to 268 constitute a Pyruvate carboxyltransferase domain; the sequence is LIIFDTTLRD…DVGIDTSQIV (264 aa). 4 residues coordinate Mn(2+): Asp-14, His-202, His-204, and Asn-239. The regulatory domain stretch occupies residues 395–514; sequence KFVSLSQHSE…KDDKVNPQRS (120 aa).

This sequence belongs to the alpha-IPM synthase/homocitrate synthase family. LeuA type 1 subfamily. In terms of assembly, homodimer. The cofactor is Mn(2+).

Its subcellular location is the cytoplasm. The catalysed reaction is 3-methyl-2-oxobutanoate + acetyl-CoA + H2O = (2S)-2-isopropylmalate + CoA + H(+). The protein operates within amino-acid biosynthesis; L-leucine biosynthesis; L-leucine from 3-methyl-2-oxobutanoate: step 1/4. Catalyzes the condensation of the acetyl group of acetyl-CoA with 3-methyl-2-oxobutanoate (2-ketoisovalerate) to form 3-carboxy-3-hydroxy-4-methylpentanoate (2-isopropylmalate). The protein is 2-isopropylmalate synthase of Burkholderia lata (strain ATCC 17760 / DSM 23089 / LMG 22485 / NCIMB 9086 / R18194 / 383).